A 319-amino-acid chain; its full sequence is Aspartate carbamoyltransferase catalytic subunit (319 aa).

Residues Arg59 and Thr60 each coordinate carbamoyl phosphate. An L-aspartate-binding site is contributed by Lys87. Carbamoyl phosphate-binding residues include Arg109, His137, and Gln140. Arg170 and Arg224 together coordinate L-aspartate. Carbamoyl phosphate is bound by residues Gly265 and Pro266.

The protein belongs to the aspartate/ornithine carbamoyltransferase superfamily. ATCase family. As to quaternary structure, heterododecamer (2C3:3R2) of six catalytic PyrB chains organized as two trimers (C3), and six regulatory PyrI chains organized as three dimers (R2).

The catalysed reaction is carbamoyl phosphate + L-aspartate = N-carbamoyl-L-aspartate + phosphate + H(+). It functions in the pathway pyrimidine metabolism; UMP biosynthesis via de novo pathway; (S)-dihydroorotate from bicarbonate: step 2/3. Its function is as follows. Catalyzes the condensation of carbamoyl phosphate and aspartate to form carbamoyl aspartate and inorganic phosphate, the committed step in the de novo pyrimidine nucleotide biosynthesis pathway. In Gemmatimonas aurantiaca (strain DSM 14586 / JCM 11422 / NBRC 100505 / T-27), this protein is Aspartate carbamoyltransferase catalytic subunit.